Reading from the N-terminus, the 490-residue chain is Betaine aldehyde dehydrogenase (490 aa).

The K(+) site is built by T26, I27, and D93. Residue G150–W152 participates in NAD(+) binding. K162 serves as the catalytic Charge relay system. K176–E179 lines the NAD(+) pocket. Residue V180 participates in K(+) binding. G230–S233 serves as a coordination point for NAD(+). L246 serves as a coordination point for K(+). E252 (proton acceptor) is an active-site residue. Residues G254, C286, and E387 each contribute to the NAD(+) site. C286 serves as the catalytic Nucleophile. Position 286 is a cysteine sulfenic acid (-SOH) (C286). K(+)-binding residues include K457 and G460. E464 serves as the catalytic Charge relay system.

Belongs to the aldehyde dehydrogenase family. In terms of assembly, dimer of dimers. The cofactor is K(+).

It carries out the reaction betaine aldehyde + NAD(+) + H2O = glycine betaine + NADH + 2 H(+). It participates in amine and polyamine biosynthesis; betaine biosynthesis via choline pathway; betaine from betaine aldehyde: step 1/1. Functionally, involved in the biosynthesis of the osmoprotectant glycine betaine. Catalyzes the irreversible oxidation of betaine aldehyde to the corresponding acid. This Escherichia coli O8 (strain IAI1) protein is Betaine aldehyde dehydrogenase.